Reading from the N-terminus, the 432-residue chain is 3-phosphoshikimate 1-carboxyvinyltransferase (432 aa).

3 residues coordinate 3-phosphoshikimate: Lys22, Ser23, and Arg27. Lys22 provides a ligand contact to phosphoenolpyruvate. Phosphoenolpyruvate contacts are provided by Gly96 and Arg127. 7 residues coordinate 3-phosphoshikimate: Ser173, Ser174, Gln175, Ser201, Asp316, Asn339, and Lys343. Residue Gln175 participates in phosphoenolpyruvate binding. The Proton acceptor role is filled by Asp316. Phosphoenolpyruvate contacts are provided by Arg347, Arg391, and Lys416.

Belongs to the EPSP synthase family. Monomer.

It is found in the cytoplasm. It carries out the reaction 3-phosphoshikimate + phosphoenolpyruvate = 5-O-(1-carboxyvinyl)-3-phosphoshikimate + phosphate. Its pathway is metabolic intermediate biosynthesis; chorismate biosynthesis; chorismate from D-erythrose 4-phosphate and phosphoenolpyruvate: step 6/7. Functionally, catalyzes the transfer of the enolpyruvyl moiety of phosphoenolpyruvate (PEP) to the 5-hydroxyl of shikimate-3-phosphate (S3P) to produce enolpyruvyl shikimate-3-phosphate and inorganic phosphate. The polypeptide is 3-phosphoshikimate 1-carboxyvinyltransferase (Actinobacillus pleuropneumoniae serotype 7 (strain AP76)).